A 644-amino-acid polypeptide reads, in one-letter code: Phosphomethylpyrimidine synthase (644 aa).

Residues asparagine 236, methionine 265, tyrosine 294, histidine 330, serine 350 to glycine 352, aspartate 391 to arginine 394, and glutamate 430 each bind substrate. Histidine 434 provides a ligand contact to Zn(2+). Tyrosine 457 is a binding site for substrate. Histidine 498 lines the Zn(2+) pocket. Cysteine 578, cysteine 581, and cysteine 586 together coordinate [4Fe-4S] cluster.

Belongs to the ThiC family. As to quaternary structure, homodimer. [4Fe-4S] cluster is required as a cofactor.

It catalyses the reaction 5-amino-1-(5-phospho-beta-D-ribosyl)imidazole + S-adenosyl-L-methionine = 4-amino-2-methyl-5-(phosphooxymethyl)pyrimidine + CO + 5'-deoxyadenosine + formate + L-methionine + 3 H(+). Its pathway is cofactor biosynthesis; thiamine diphosphate biosynthesis. Its function is as follows. Catalyzes the synthesis of the hydroxymethylpyrimidine phosphate (HMP-P) moiety of thiamine from aminoimidazole ribotide (AIR) in a radical S-adenosyl-L-methionine (SAM)-dependent reaction. The sequence is that of Phosphomethylpyrimidine synthase from Aliivibrio fischeri (strain ATCC 700601 / ES114) (Vibrio fischeri).